Consider the following 656-residue polypeptide: NADH-ubiquinone oxidoreductase chain 5 (656 aa).

Transmembrane regions (helical) follow at residues T4–R21, A28–V50, L81–Y103, R112–T129, Y133–F155, T176–F198, I208–H230, V243–R262, T272–F294, V301–L319, L329–A351, E364–M386, I409–L431, L452–L471, F514–I536, S603–F625, and L629–L651.

This sequence belongs to the complex I subunit 5 family.

It localises to the mitochondrion inner membrane. The enzyme catalyses a ubiquinone + NADH + 5 H(+)(in) = a ubiquinol + NAD(+) + 4 H(+)(out). Its function is as follows. Core subunit of the mitochondrial membrane respiratory chain NADH dehydrogenase (Complex I) that is believed to belong to the minimal assembly required for catalysis. Complex I functions in the transfer of electrons from NADH to the respiratory chain. The immediate electron acceptor for the enzyme is believed to be ubiquinone. This chain is NADH-ubiquinone oxidoreductase chain 5 (nad5), found in Aspergillus niger.